The following is a 60-amino-acid chain: Large ribosomal subunit protein bL32 (60 aa).

The interval M1–T23 is disordered. The span at H7–Y20 shows a compositional bias: basic residues.

Belongs to the bacterial ribosomal protein bL32 family.

This chain is Large ribosomal subunit protein bL32, found in Streptococcus equi subsp. equi (strain 4047).